The chain runs to 280 residues: 3-methyl-2-oxobutanoate hydroxymethyltransferase (280 aa).

Residues D61 and D100 each coordinate Mg(2+). Residues 61–62 (DS), D100, and K130 each bind 3-methyl-2-oxobutanoate. E132 contributes to the Mg(2+) binding site. E198 (proton acceptor) is an active-site residue.

Belongs to the PanB family. Homodecamer; pentamer of dimers. Mg(2+) serves as cofactor.

It localises to the cytoplasm. The catalysed reaction is 3-methyl-2-oxobutanoate + (6R)-5,10-methylene-5,6,7,8-tetrahydrofolate + H2O = 2-dehydropantoate + (6S)-5,6,7,8-tetrahydrofolate. The protein operates within cofactor biosynthesis; (R)-pantothenate biosynthesis; (R)-pantoate from 3-methyl-2-oxobutanoate: step 1/2. In terms of biological role, catalyzes the reversible reaction in which hydroxymethyl group from 5,10-methylenetetrahydrofolate is transferred onto alpha-ketoisovalerate to form ketopantoate. This chain is 3-methyl-2-oxobutanoate hydroxymethyltransferase, found in Mycolicibacterium vanbaalenii (strain DSM 7251 / JCM 13017 / BCRC 16820 / KCTC 9966 / NRRL B-24157 / PYR-1) (Mycobacterium vanbaalenii).